A 448-amino-acid polypeptide reads, in one-letter code: F-box/FBD/LRR-repeat protein At2g04230 (448 aa).

Residues 12-64 enclose the F-box domain; that stretch reads EDRISDLPDALLLQILSSLPTENAIATSVLSKRWRSLWTMLPKLKFDSNFNPV. LRR repeat units lie at residues 72 to 98, 149 to 176, 177 to 202, 204 to 225, 226 to 251, 271 to 296, and 319 to 345; these read PTMF…HLSF, ILKL…YLDQ, VHFK…VVHR, SNAD…TIED, LRQE…NING, ISNV…ILHL, and THER…KLTD. Residues 359-410 form the FBD domain; sequence KWNPPKCAPECLLFHLETFLWIGYEWQRGDEKEVATYILENARRLKKATFST.

In Arabidopsis thaliana (Mouse-ear cress), this protein is F-box/FBD/LRR-repeat protein At2g04230.